We begin with the raw amino-acid sequence, 123 residues long: ATP synthase epsilon chain (123 aa).

Residues 96 to 123 (ESRKQSAETEHDKAVAESELRAVKRMEA) are disordered.

This sequence belongs to the ATPase epsilon chain family. F-type ATPases have 2 components, CF(1) - the catalytic core - and CF(0) - the membrane proton channel. CF(1) has five subunits: alpha(3), beta(3), gamma(1), delta(1), epsilon(1). CF(0) has three main subunits: a, b and c.

It localises to the cell membrane. Functionally, produces ATP from ADP in the presence of a proton gradient across the membrane. The polypeptide is ATP synthase epsilon chain (Corynebacterium jeikeium (strain K411)).